Consider the following 561-residue polypeptide: Long-chain-fatty-acid--CoA ligase (561 aa).

213 to 224 (YTGGTTGVAKGA) is a binding site for ATP.

It belongs to the ATP-dependent AMP-binding enzyme family. Mg(2+) is required as a cofactor.

It is found in the membrane. It catalyses the reaction a long-chain fatty acid + ATP + CoA = a long-chain fatty acyl-CoA + AMP + diphosphate. It participates in lipid metabolism; fatty acid beta-oxidation. Its function is as follows. Catalyzes the esterification, concomitant with transport, of exogenous long-chain fatty acids into metabolically active CoA thioesters for subsequent degradation or incorporation into phospholipids. The protein is Long-chain-fatty-acid--CoA ligase (fadD) of Salmonella typhi.